Here is a 91-residue protein sequence, read N- to C-terminus: N.vectensis toxin 8 (91 aa).

A signal peptide spans 1–26 (MNSLLKVAVVCLVMLVACFVPRVILT). Disulfide bonds link Cys45-Cys76, Cys47-Cys67, and Cys60-Cys77.

In terms of tissue distribution, expressed in ectodermal gland cells.

Functionally, has toxic effects on zebrafish larvae. It causes contractile paralysis and twitching of the tail within 20 minutes, followed by death within 30 minutes. Does not show any toxicity when injected into arthropods (cherry shrimps or grass shrimps). The chain is N.vectensis toxin 8 from Nematostella vectensis (Starlet sea anemone).